We begin with the raw amino-acid sequence, 487 residues long: CUGBP Elav-like family member 1 (487 aa).

The residue at position 1 (Met1) is an N-acetylmethionine. Phosphothreonine is present on Thr4. RRM domains follow at residues 16–99 and 108–188; these read IKMF…PADS and RKLF…FADT. Residue Lys109 forms a Glycyl lysine isopeptide (Lys-Gly) (interchain with G-Cter in SUMO2) linkage. 2 positions are modified to phosphoserine: Ser179 and Ser303. The tract at residues 277 to 310 is disordered; sequence TPSGTNALTTSSSPLSVLTSSAGSSPSSSSSNSV. The segment covering 283 to 310 has biased composition (low complexity); that stretch reads ALTTSSSPLSVLTSSAGSSPSSSSSNSV. One can recognise an RRM 3 domain in the interval 402 to 480; sequence ANLFIYHLPQ…KRLKVQLKRS (79 aa).

The protein belongs to the CELF/BRUNOL family. As to quaternary structure, interacts with HNRNPH1; the interaction in RNA-dependent. Interacts with PARN. Component of an EIF2 complex at least composed of CELF1/CUGBP1, CALR, CALR3, EIF2S1, EIF2S2, HSP90B1 and HSPA5. Associates with polysomes.

It is found in the nucleus. Its subcellular location is the cytoplasm. Functionally, RNA-binding protein implicated in the regulation of several post-transcriptional events. Involved in pre-mRNA alternative splicing, mRNA translation and stability. Mediates exon inclusion and/or exclusion in pre-mRNA that are subject to tissue-specific and developmentally regulated alternative splicing. Specifically activates exon 5 inclusion of cardiac isoforms of TNNT2 during heart remodeling at the juvenile to adult transition. Acts both as an activator and as a repressor of a pair of coregulated exons: promotes inclusion of the smooth muscle (SM) exon but exclusion of the non-muscle (NM) exon in actinin pre-mRNAs. Activates SM exon 5 inclusion by antagonizing the repressive effect of PTB. Promotes exclusion of exon 11 of the INSR pre-mRNA. Inhibits, together with HNRNPH1, insulin receptor (IR) pre-mRNA exon 11 inclusion in myoblast. Increases translation and controls the choice of translation initiation codon of CEBPB mRNA. Increases mRNA translation of CEBPB in aging liver. Increases translation of CDKN1A mRNA by antagonizing the repressive effect of CALR3. Mediates rapid cytoplasmic mRNA deadenylation. Recruits the deadenylase PARN to the poly(A) tail of EDEN-containing mRNAs to promote their deadenylation. Required for completion of spermatogenesis. Binds to (CUG)n triplet repeats in the 3'-UTR of transcripts such as DMPK and to Bruno response elements (BREs). Binds to muscle-specific splicing enhancer (MSE) intronic sites flanking the alternative exon 5 of TNNT2 pre-mRNA. Binds to AU-rich sequences (AREs or EDEN-like) localized in the 3'-UTR of JUN and FOS mRNAs. Binds to the IR RNA. Binds to the 5'-region of CDKN1A and CEBPB mRNAs. Binds with the 5'-region of CEBPB mRNA in aging liver. May be a specific regulator of miRNA biogenesis. Binds to primary microRNA pri-MIR140 and, with CELF2, negatively regulates the processing to mature miRNA. The sequence is that of CUGBP Elav-like family member 1 (Celf1) from Rattus norvegicus (Rat).